The following is a 233-amino-acid chain: MASLQANATSSLQYQTAPLESSHIPGSPHSVHVLLEGYSKDVGGDLFQADGSVTLIQGPLTVLVDTAGPWSRDSLLQSLQNQGVAPADVTHVICTHGHSDHVGNLNLFSHAEILVSYDLWRNGYYVAHDFRAGVPYVLPGGEGLEVVATPGHTGSDISLLVPGTSLGTVVVAGDLFEREGDGDSWQPLSEDPERQEDSRAAILKVADVIIPGHGPPFRVIKHGQLAQQETKNN.

Zn(2+)-binding residues include H96, H98, D100, H101, H152, D174, and H213.

The protein belongs to the metallo-beta-lactamase superfamily. Glyoxalase II family. In terms of assembly, homodimer. Zn(2+) serves as cofactor.

The protein localises to the cytoplasm. It is found in the cytosol. Its subcellular location is the nucleus. The catalysed reaction is a ribonucleotidyl-ribonucleotide-RNA + H2O = a 3'-end ribonucleotide-RNA + a 5'-end 5'-phospho-ribonucleoside-RNA + H(+). Functionally, endoribonuclease that catalyzes the hydrolysis of histone-coding pre-mRNA 3'-end. Involved in histone pre-mRNA processing during the S-phase of the cell cycle, which is required for entering/progressing through S-phase. Cleaves histone pre-mRNA at a major and a minor cleavage site after the 5'-ACCCA-3' and the 5'-ACCCACA-3' sequence, respectively, and located downstream of the stem-loop. May require the presence of the HDE element located at the histone pre-RNA 3'-end to avoid non-specific cleavage. In Xenopus laevis (African clawed frog), this protein is Metallo-beta-lactamase domain-containing protein 1 (mblac1).